The primary structure comprises 488 residues: ATP-dependent RNA helicase dbp3 (488 aa).

Basic and acidic residues predominate over residues 1 to 29 (MAKREHQDQTGDSRPSKKSKGTKDTKKNT). The interval 1-42 (MAKREHQDQTGDSRPSKKSKGTKDTKKNTEVSPPYFQSPALD) is disordered. Positions 92–100 (GFASPTAIQ) match the Q motif motif. The Helicase ATP-binding domain maps to 104–279 (WPLLFAGRDV…STFMTSPVTV (176 aa)). 117–124 (AETGSGKT) contacts ATP. Residues 226–229 (DEAD) carry the DEAD box motif. The Helicase C-terminal domain occupies 306 to 457 (EKEQRLVQIL…EVPEALLKFG (152 aa)).

It belongs to the DEAD box helicase family. DDX5/DBP2 subfamily.

It is found in the nucleus. The protein localises to the nucleolus. It carries out the reaction ATP + H2O = ADP + phosphate + H(+). Functionally, ATP-dependent RNA helicase required for 60S ribosomal subunit synthesis. Involved in efficient pre-rRNA processing, predominantly at site A3, which is necessary for the normal formation of 25S and 5.8S rRNAs. This chain is ATP-dependent RNA helicase dbp3 (dbp3), found in Emericella nidulans (strain FGSC A4 / ATCC 38163 / CBS 112.46 / NRRL 194 / M139) (Aspergillus nidulans).